A 249-amino-acid chain; its full sequence is MGQKVNPVGLRLGINRTWDSRWFADGEQYGKLLHQDLAVRAMLKKRLYQAGVSRIIIERPHKKCRVTIYAARPGVIIGKKGADIDKLRKDLSVMTEGEVHLNIVEIRKPETDAQLVAESIAQQLERRIAFRRAMKRSIQSAVRLGAKGIRINVSGRLGGAEIARMEWYREGRVPLHTLRADIDYGFAEAKTTYGIIGVKTWIFKGEVLEHDPMALDKRLATESGPAGEGGGRERGDRPDRGDRGRRDRG.

The 69-residue stretch at 39-107 (VRAMLKKRLY…EVHLNIVEIR (69 aa)) folds into the KH type-2 domain. A disordered region spans residues 215–249 (LDKRLATESGPAGEGGGRERGDRPDRGDRGRRDRG). Over residues 230–249 (GGRERGDRPDRGDRGRRDRG) the composition is skewed to basic and acidic residues.

It belongs to the universal ribosomal protein uS3 family. In terms of assembly, part of the 30S ribosomal subunit. Forms a tight complex with proteins S10 and S14.

Binds the lower part of the 30S subunit head. Binds mRNA in the 70S ribosome, positioning it for translation. The protein is Small ribosomal subunit protein uS3 of Caulobacter sp. (strain K31).